The sequence spans 642 residues: Wall-associated receptor kinase-like 6 (642 aa).

An N-terminal signal peptide occupies residues 1–28; sequence MKKTKTYQVFCIAALSVLTLQLINGSSA. The Extracellular portion of the chain corresponds to 29–357; the sequence is ATPPPPNSNS…PKITKPEKAS (329 aa). N-linked (GlcNAc...) asparagine glycans are attached at residues Asn-37, Asn-72, Asn-95, Asn-137, Asn-216, Asn-240, and Asn-276. The tract at residues 289 to 346 is atypical EGF-like; it reads CSCEYDYFSGMSYRICYCNYGYTGNPYLRHGCIDIDECEGHHNCGEGTCVNMPGTHSC. 3 cysteine pairs are disulfide-bonded: Cys-291–Cys-304, Cys-326–Cys-337, and Cys-332–Cys-346. The chain crosses the membrane as a helical span at residues 358 to 378; that stretch reads VLQGVLISLGVLLFVLGILGL. Residues 379-642 lie on the Cytoplasmic side of the membrane; it reads YKFIKKRTRI…KPLSRKRIGN (264 aa). Positions 432–642 constitute a Protein kinase domain; sequence FSMNRVLGQG…KPLSRKRIGN (211 aa). ATP is bound by residues 438 to 446 and Lys-460; that span reads LGQGGQGTV. The residue at position 505 (Tyr-505) is a Phosphotyrosine. Asp-559 serves as the catalytic Proton acceptor. Thr-593 and Thr-598 each carry phosphothreonine. Tyr-606 carries the post-translational modification Phosphotyrosine.

The protein belongs to the protein kinase superfamily. Ser/Thr protein kinase family. As to expression, slightly expressed in the whole plant.

It localises to the membrane. It catalyses the reaction L-seryl-[protein] + ATP = O-phospho-L-seryl-[protein] + ADP + H(+). The enzyme catalyses L-threonyl-[protein] + ATP = O-phospho-L-threonyl-[protein] + ADP + H(+). Its function is as follows. Serine/threonine-protein kinase that may function as a signaling receptor of extracellular matrix component. The sequence is that of Wall-associated receptor kinase-like 6 (WAKL6) from Arabidopsis thaliana (Mouse-ear cress).